The sequence spans 350 residues: MGVNIREVIPPEAIQEIDLAHLKYKVVAIDAYNALYQFLTAIRQPDGTPLMDSKGRITSHLSGLFYRTINLMEHGIKIVYVFDGKPPEMKYLEIERRKRVKSEAVKKYEEAVKKGDTKAARRYAQMAARLTDEMVEDAKKLLDAMGVPWVQAPAEGEAQAAFMARRGDAWAAASQDYDSLLFGSPRLVRNLAITGRRKLPRKDVYVEIKPELIELDKLLKALGITREQLVALGILIGTDYNPDGVKGIGPKTALKMVKAHRDPVKLLQGLPRHEFPTDPLKIYEYFLNPPVTTDYKLEWREPDEKKVFEILVEGHDFSPERVRNALERLKKAYREHFRGQQMGLDAWLRR.

The interval 1-101 (MGVNIREVIP…LEIERRKRVK (101 aa)) is N-domain. The Mg(2+) site is built by Asp30, Asp83, Glu155, Glu157, Asp176, Asp178, and Asp239. The tract at residues 119–261 (AARRYAQMAA…TALKMVKAHR (143 aa)) is I-domain. Residues 340–348 (QQMGLDAWL) are interaction with PCNA.

Belongs to the XPG/RAD2 endonuclease family. FEN1 subfamily. In terms of assembly, interacts with PCNA. PCNA stimulates the nuclease activity without altering cleavage specificity. Requires Mg(2+) as cofactor.

Functionally, structure-specific nuclease with 5'-flap endonuclease and 5'-3' exonuclease activities involved in DNA replication and repair. During DNA replication, cleaves the 5'-overhanging flap structure that is generated by displacement synthesis when DNA polymerase encounters the 5'-end of a downstream Okazaki fragment. Binds the unpaired 3'-DNA end and kinks the DNA to facilitate 5' cleavage specificity. Cleaves one nucleotide into the double-stranded DNA from the junction in flap DNA, leaving a nick for ligation. Also involved in the base excision repair (BER) pathway. Acts as a genome stabilization factor that prevents flaps from equilibrating into structures that lead to duplications and deletions. Also possesses 5'-3' exonuclease activity on nicked or gapped double-stranded DNA. The protein is Flap endonuclease 1 of Hyperthermus butylicus (strain DSM 5456 / JCM 9403 / PLM1-5).